Consider the following 157-residue polypeptide: Transcription antitermination protein NusB (157 aa).

Belongs to the NusB family.

In terms of biological role, involved in transcription antitermination. Required for transcription of ribosomal RNA (rRNA) genes. Binds specifically to the boxA antiterminator sequence of the ribosomal RNA (rrn) operons. This is Transcription antitermination protein NusB from Xylella fastidiosa (strain 9a5c).